The following is a 651-amino-acid chain: ATP synthase F(1) complex catalytic subunit beta, mitochondrial (651 aa).

The transit peptide at 1-30 (MFVARRLSKNITQISKTAVKTSVRAVPVRG) directs the protein to the mitochondrion. Gly259, Val260, Gly261, Lys262, Thr263, and Val264 together coordinate ADP. Gly259 contacts ATP. Gly259, Val260, Gly261, Lys262, and Thr263 together coordinate phosphate. ATP contacts are provided by Gly261, Lys262, Thr263, and Val264. Thr263 is a binding site for Mg(2+). Glu288 is a Mg(2+) binding site. Arg289 contacts ATP.

The protein belongs to the ATPase alpha/beta chains family. As to quaternary structure, homotrimer. Component of the ATP synthase complex composed at least of ATP5F1A/subunit alpha, ATP5F1B/subunit beta, ATP5MC1/subunit c (homooctomer), MT-ATP6/subunit a, MT-ATP8/subunit 8, ATP5ME/subunit e, ATP5MF/subunit f, ATP5MG/subunit g, ATP5MK/subunit k, ATP5MJ/subunit j, ATP5F1C/subunit gamma, ATP5F1D/subunit delta, ATP5F1E/subunit epsilon, ATP5PF/subunit F6, ATP5PB/subunit b, ATP5PD/subunit d, ATP5PO/subunit OSCP. ATP synthase complex consists of a soluble F(1) head domain (subunits alpha(3) and beta(3)) - the catalytic core - and a membrane F(0) domain - the membrane proton channel (subunits c, a, 8, e, f, g, k and j). These two domains are linked by a central stalk (subunits gamma, delta, and epsilon) rotating inside the F1 region and a stationary peripheral stalk (subunits F6, b, d, and OSCP).

The protein localises to the mitochondrion inner membrane. It carries out the reaction ATP + H2O + 4 H(+)(in) = ADP + phosphate + 5 H(+)(out). In terms of biological role, catalytic subunit beta, of the mitochondrial membrane ATP synthase complex (F(1)F(0) ATP synthase or Complex V) that produces ATP from ADP in the presence of a proton gradient across the membrane which is generated by electron transport complexes of the respiratory chain. ATP synthase complex consist of a soluble F(1) head domain - the catalytic core - and a membrane F(1) domain - the membrane proton channel. These two domains are linked by a central stalk rotating inside the F(1) region and a stationary peripheral stalk. During catalysis, ATP synthesis in the catalytic domain of F(1) is coupled via a rotary mechanism of the central stalk subunits to proton translocation. In vivo, can only synthesize ATP although its ATP hydrolase activity can be activated artificially in vitro. With the subunit alpha (ATP5F1A), forms the catalytic core in the F(1) domain. This is ATP synthase F(1) complex catalytic subunit beta, mitochondrial from Dictyostelium discoideum (Social amoeba).